Reading from the N-terminus, the 546-residue chain is Probable malate:quinone oxidoreductase (546 aa).

It belongs to the MQO family. It depends on FAD as a cofactor.

It catalyses the reaction (S)-malate + a quinone = a quinol + oxaloacetate. It functions in the pathway carbohydrate metabolism; tricarboxylic acid cycle; oxaloacetate from (S)-malate (quinone route): step 1/1. The sequence is that of Probable malate:quinone oxidoreductase from Acinetobacter baumannii (strain AB0057).